A 664-amino-acid polypeptide reads, in one-letter code: UvrABC system protein B (664 aa).

One can recognise a Helicase ATP-binding domain in the interval 23 to 180 (EGLNRGMRFQ…EKLAKIGYQR (158 aa)). ATP is bound at residue 36–43 (GVTGSGKT). Residues 89-112 (YYDYYQPEAYIPTKDLYIEKNADI) carry the Beta-hairpin motif. In terms of domain architecture, Helicase C-terminal spans 426 to 588 (QVDDLINEIV…ITPRSIVKPL (163 aa)). Positions 622–657 (EEYVALLEEEMYRAASELRYEDAAALRDELFRVKET) constitute a UVR domain.

This sequence belongs to the UvrB family. As to quaternary structure, forms a heterotetramer with UvrA during the search for lesions. Interacts with UvrC in an incision complex.

It localises to the cytoplasm. In terms of biological role, the UvrABC repair system catalyzes the recognition and processing of DNA lesions. A damage recognition complex composed of 2 UvrA and 2 UvrB subunits scans DNA for abnormalities. Upon binding of the UvrA(2)B(2) complex to a putative damaged site, the DNA wraps around one UvrB monomer. DNA wrap is dependent on ATP binding by UvrB and probably causes local melting of the DNA helix, facilitating insertion of UvrB beta-hairpin between the DNA strands. Then UvrB probes one DNA strand for the presence of a lesion. If a lesion is found the UvrA subunits dissociate and the UvrB-DNA preincision complex is formed. This complex is subsequently bound by UvrC and the second UvrB is released. If no lesion is found, the DNA wraps around the other UvrB subunit that will check the other stand for damage. The sequence is that of UvrABC system protein B from Thermotoga neapolitana (strain ATCC 49049 / DSM 4359 / NBRC 107923 / NS-E).